Reading from the N-terminus, the 331-residue chain is Adenosine deaminase (331 aa).

Zn(2+)-binding residues include His-12 and His-14. Substrate-binding residues include His-14, Asp-16, and Gly-170. Zn(2+) is bound at residue His-197. Glu-200 acts as the Proton donor in catalysis. Position 278 (Asp-278) interacts with Zn(2+). Residue Asp-279 coordinates substrate.

Belongs to the metallo-dependent hydrolases superfamily. Adenosine and AMP deaminases family. Adenosine deaminase subfamily. It depends on Zn(2+) as a cofactor.

It carries out the reaction adenosine + H2O + H(+) = inosine + NH4(+). The enzyme catalyses 2'-deoxyadenosine + H2O + H(+) = 2'-deoxyinosine + NH4(+). Functionally, catalyzes the hydrolytic deamination of adenosine and 2-deoxyadenosine. The protein is Adenosine deaminase of Shewanella sp. (strain ANA-3).